A 575-amino-acid polypeptide reads, in one-letter code: Septation ring formation regulator EzrA (575 aa).

Topologically, residues Met-1–Tyr-8 are extracellular. The chain crosses the membrane as a helical span at residues Leu-9–Leu-27. Topologically, residues Arg-28–Phe-575 are cytoplasmic. Coiled coils occupy residues Leu-105–Leu-191, Leu-265–Ile-301, Val-354–Asp-416, and Thr-456–Ala-526.

It belongs to the EzrA family.

Its subcellular location is the cell membrane. Its function is as follows. Negative regulator of FtsZ ring formation; modulates the frequency and position of FtsZ ring formation. Inhibits FtsZ ring formation at polar sites. Interacts either with FtsZ or with one of its binding partners to promote depolymerization. The polypeptide is Septation ring formation regulator EzrA (Streptococcus pneumoniae serotype 4 (strain ATCC BAA-334 / TIGR4)).